The sequence spans 366 residues: G-protein coupled receptor 183 (366 aa).

The Extracellular portion of the chain corresponds to 1–37; the sequence is MQVMRTFNQPPTSSHPTPTLNDSDTCITLYNHRGYAR. An N-linked (GlcNAc...) asparagine glycan is attached at Asn-21. A helical membrane pass occupies residues 38–63; it reads VLMPLFYCIVFFVGLLGNALAFHIIR. Residues 64–83 are Cytoplasmic-facing; sequence PNVKKINSTTLYSANLVISD. The chain crosses the membrane as a helical span at residues 84–101; that stretch reads ILFTLSLPLRIIYYALGF. The Extracellular segment spans residues 102–111; the sequence is HWPLGETLCK. Cysteines 110 and 188 form a disulfide. Residues 112-133 form a helical membrane-spanning segment; the sequence is IVGLIFYINTYAGVNFMTCLSV. Topologically, residues 134–155 are cytoplasmic; it reads DRFIAVVLPLRFARFRKVSNVR. A helical membrane pass occupies residues 156–174; that stretch reads YICVGVWLLVLMQTLPLLS. Residues 175-199 lie on the Extracellular side of the membrane; sequence MPMTNEEPDGFITCMEYPNFEPVPN. A helical membrane pass occupies residues 200–222; the sequence is ISYILIGAVFLGYGVPVVTILVC. The Cytoplasmic portion of the chain corresponds to 223 to 248; the sequence is YSILCCKLRLAAKANQLTDKSGRSQK. The helical transmembrane segment at 249-272 threads the bilayer; that stretch reads AIGVICCVSLVFVVCFSPYHIDLL. Residues 273 to 292 are Extracellular-facing; it reads QYMIRKLIYTPDCAELTAFQ. A helical transmembrane segment spans residues 293–317; that stretch reads ISLHFTVCLMNLNSCLDPFIYFFAC. The Cytoplasmic portion of the chain corresponds to 318 to 366; it reads KGYKTKVLKILKRQVSVSFSSAARTLPEGLSRDISDGNKIHLNSTRHKE.

Belongs to the G-protein coupled receptor 1 family.

It is found in the cell membrane. In terms of biological role, G-protein coupled receptor expressed in lymphocytes that acts as a chemotactic receptor for B-cells, T-cells, splenic dendritic cells, monocytes/macrophages and astrocytes. Receptor for oxysterol 7-alpha,25-dihydroxycholesterol (7-alpha,25-OHC) and other related oxysterols. Mediates cell positioning and movement of a number of cells by binding the 7-alpha,25-OHC ligand that forms a chemotactic gradient. Binding of 7-alpha,25-OHC mediates the correct localization of B-cells during humoral immune responses. This is G-protein coupled receptor 183 (gpr183) from Salmo salar (Atlantic salmon).